Consider the following 73-residue polypeptide: uncharacterized protein (73 aa).

This is an uncharacterized protein from Vaccinia virus (strain Copenhagen) (VACV).